A 356-amino-acid chain; its full sequence is Histidinol-phosphate aminotransferase (356 aa).

Lysine 217 carries the post-translational modification N6-(pyridoxal phosphate)lysine.

The protein belongs to the class-II pyridoxal-phosphate-dependent aminotransferase family. Histidinol-phosphate aminotransferase subfamily. In terms of assembly, homodimer. The cofactor is pyridoxal 5'-phosphate.

The catalysed reaction is L-histidinol phosphate + 2-oxoglutarate = 3-(imidazol-4-yl)-2-oxopropyl phosphate + L-glutamate. The protein operates within amino-acid biosynthesis; L-histidine biosynthesis; L-histidine from 5-phospho-alpha-D-ribose 1-diphosphate: step 7/9. This Chromobacterium violaceum (strain ATCC 12472 / DSM 30191 / JCM 1249 / CCUG 213 / NBRC 12614 / NCIMB 9131 / NCTC 9757 / MK) protein is Histidinol-phosphate aminotransferase.